The sequence spans 190 residues: Nucleoside triphosphate pyrophosphatase (190 aa).

Aspartate 69 functions as the Proton acceptor in the catalytic mechanism.

The protein belongs to the Maf family. The cofactor is a divalent metal cation.

The protein localises to the cytoplasm. The catalysed reaction is a ribonucleoside 5'-triphosphate + H2O = a ribonucleoside 5'-phosphate + diphosphate + H(+). It catalyses the reaction a 2'-deoxyribonucleoside 5'-triphosphate + H2O = a 2'-deoxyribonucleoside 5'-phosphate + diphosphate + H(+). Functionally, nucleoside triphosphate pyrophosphatase. May have a dual role in cell division arrest and in preventing the incorporation of modified nucleotides into cellular nucleic acids. This Helicobacter pylori (strain P12) protein is Nucleoside triphosphate pyrophosphatase.